Here is a 284-residue protein sequence, read N- to C-terminus: GPN-loop GTPase 3 (284 aa).

Position 13 to 18 (13 to 18) interacts with GTP; it reads GSGKST. Positions 72–74 match the Gly-Pro-Asn (GPN)-loop; involved in dimer interface motif; the sequence is GPN. Position 174-177 (174-177) interacts with GTP; sequence TKMD. The disordered stretch occupies residues 261–284; the sequence is KEPKEHEEESSSMFDEYFQERQNE.

This sequence belongs to the GPN-loop GTPase family. As to quaternary structure, heterodimer with GPN1. Binds to RNA polymerase II (RNAPII). Interacts directly with subunits RPB4 and RPB7 and the CTD of RPB1.

In terms of biological role, small GTPase required for proper localization of RNA polymerase II (RNAPII). May act at an RNAP assembly step prior to nuclear import. The chain is GPN-loop GTPase 3 from Rattus norvegicus (Rat).